A 241-amino-acid polypeptide reads, in one-letter code: Nopaline transport system permease protein NocM (241 aa).

In terms of domain architecture, ABC transmembrane type-1 spans 17 to 215; sequence VPTTLTLAFI…FITFVVSRLV (199 aa). 5 helical membrane-spanning segments follow: residues 21–41, 52–72, 95–115, 161–181, and 191–211; these read LTLAFISLLIGFVVSVPVALM, LAYGYVYIIRSTPLLVQMFLI, PWFCAILALALNTAAYTSEII, VMLIIKSTSLASTITIVEVTG, and YSPVEVFIVAGAIYLFITFVV.

Belongs to the binding-protein-dependent transport system permease family. HisMQ subfamily.

The protein localises to the cell inner membrane. Component of the nopaline active transport system probably consisting of four subunits: Q, M, P and T. This system is also capable of transporting octopine provided that catabolic functions are induced with nopaline. The chain is Nopaline transport system permease protein NocM (nocM) from Agrobacterium fabrum (strain C58 / ATCC 33970) (Agrobacterium tumefaciens (strain C58)).